Consider the following 311-residue polypeptide: Aspartate carbamoyltransferase catalytic subunit (311 aa).

The carbamoyl phosphate site is built by arginine 55 and threonine 56. Lysine 85 is a binding site for L-aspartate. Positions 106, 135, and 138 each coordinate carbamoyl phosphate. L-aspartate is bound by residues arginine 168 and arginine 230. 2 residues coordinate carbamoyl phosphate: leucine 268 and proline 269.

It belongs to the aspartate/ornithine carbamoyltransferase superfamily. ATCase family. In terms of assembly, heterododecamer (2C3:3R2) of six catalytic PyrB chains organized as two trimers (C3), and six regulatory PyrI chains organized as three dimers (R2).

The enzyme catalyses carbamoyl phosphate + L-aspartate = N-carbamoyl-L-aspartate + phosphate + H(+). It participates in pyrimidine metabolism; UMP biosynthesis via de novo pathway; (S)-dihydroorotate from bicarbonate: step 2/3. In terms of biological role, catalyzes the condensation of carbamoyl phosphate and aspartate to form carbamoyl aspartate and inorganic phosphate, the committed step in the de novo pyrimidine nucleotide biosynthesis pathway. This is Aspartate carbamoyltransferase catalytic subunit from Serratia proteamaculans (strain 568).